The sequence spans 245 residues: UPF0246 protein CE1889 (245 aa).

The segment at 1–20 (MLILLPPSETKTPGGAGAPL) is disordered.

It belongs to the UPF0246 family.

This Corynebacterium efficiens (strain DSM 44549 / YS-314 / AJ 12310 / JCM 11189 / NBRC 100395) protein is UPF0246 protein CE1889.